We begin with the raw amino-acid sequence, 130 residues long: Fumarate reductase subunit C (130 aa).

A run of 3 helical transmembrane segments spans residues 37 to 57 (VWFSILLIYGVFALKSGPAGW), 60 to 80 (FVGFLQNPLVLLINIITLLAA), and 109 to 129 (VIKALWVVTIVATAIILAVAL).

The protein belongs to the FrdC family. Part of an enzyme complex containing four subunits: a flavoprotein (FrdA), an iron-sulfur protein (FrdB), and two hydrophobic anchor proteins (FrdC and FrdD).

It localises to the cell inner membrane. In terms of biological role, two distinct, membrane-bound, FAD-containing enzymes are responsible for the catalysis of fumarate and succinate interconversion; fumarate reductase is used in anaerobic growth, and succinate dehydrogenase is used in aerobic growth. Anchors the catalytic components of the fumarate reductase complex to the cell inner membrane, binds quinones. The sequence is that of Fumarate reductase subunit C from Yersinia enterocolitica serotype O:8 / biotype 1B (strain NCTC 13174 / 8081).